The sequence spans 267 residues: Shikimate dehydrogenase (NADP(+)) (267 aa).

Residues 14–16 and Thr-61 each bind shikimate; that span reads SLS. Residue Lys-65 is the Proton acceptor of the active site. 2 residues coordinate shikimate: Asn-86 and Asp-101. Residues 126-130, 150-155, and Leu-213 each bind NADP(+); these read GAGGA and NRTPFK. Tyr-215 is a shikimate binding site. Position 236 (Gly-236) interacts with NADP(+).

The protein belongs to the shikimate dehydrogenase family. Homodimer.

The enzyme catalyses shikimate + NADP(+) = 3-dehydroshikimate + NADPH + H(+). It functions in the pathway metabolic intermediate biosynthesis; chorismate biosynthesis; chorismate from D-erythrose 4-phosphate and phosphoenolpyruvate: step 4/7. Its function is as follows. Involved in the biosynthesis of the chorismate, which leads to the biosynthesis of aromatic amino acids. Catalyzes the reversible NADPH linked reduction of 3-dehydroshikimate (DHSA) to yield shikimate (SA). The chain is Shikimate dehydrogenase (NADP(+)) from Ruthia magnifica subsp. Calyptogena magnifica.